The chain runs to 135 residues: Large ribosomal subunit protein uL16m (135 aa).

It belongs to the universal ribosomal protein uL16 family.

It localises to the mitochondrion. The chain is Large ribosomal subunit protein uL16m (RPL16) from Marchantia polymorpha (Common liverwort).